The sequence spans 83 residues: Acyl carrier protein MmaB (83 aa).

One can recognise a Carrier domain in the interval 3–83 (DPVRQRILLA…LSQSELESPT (81 aa)). Position 39 is an O-(pantetheine 4'-phosphoryl)serine (Ser39).

It belongs to the acyl carrier protein (ACP) family. The cofactor is pantetheine 4'-phosphate.

The protein operates within lipid metabolism; fatty acid metabolism. Acyl-carrier protein (ACP) involved in the biosynthesis of a unique class of isonitrile lipopeptides (INLPs) that seem to play a role in metal acquisition in M.marinum. Is the dedicated ACP for the loading of activated acyl groups catalyzed by MmaC. This is Acyl carrier protein MmaB from Mycobacterium marinum (strain ATCC BAA-535 / M).